A 274-amino-acid polypeptide reads, in one-letter code: Copper chaperone for superoxide dismutase (274 aa).

In terms of domain architecture, HMA spans 11–74 (LCTLEFAVQM…LLEGTGRQAV (64 aa)). Cu cation-binding residues include cysteine 22 and cysteine 25. Lysine 76 participates in a covalent cross-link: Glycyl lysine isopeptide (Lys-Gly) (interchain with G-Cter in ubiquitin). The segment at 88-234 (AAVAILGGPG…LACGIIARSA (147 aa)) is superoxide dismutase-like. A disulfide bridge links cysteine 141 with cysteine 227. 4 residues coordinate Zn(2+): histidine 147, histidine 155, histidine 164, and aspartate 167. Residues lysine 189, lysine 216, and lysine 241 each participate in a glycyl lysine isopeptide (Lys-Gly) (interchain with G-Cter in ubiquitin) cross-link. Cu cation is bound by residues cysteine 244 and cysteine 246. Residue serine 267 is modified to Phosphoserine.

The protein in the C-terminal section; belongs to the Cu-Zn superoxide dismutase family. Homodimer, and heterodimer with SOD1. Interacts with COMMD1. Interacts with XIAP/BIRC4. Interacts with SLC31A1(via C-terminal domain); this interaction is Cu(1+)-mediated. The heterodimer CCS:SOD1 interacts with SLC31A1; this heterotrimer is Cu(1+)-mediated and its maintenance is regulated through SOD1 activation. Requires Cu(2+) as cofactor. The cofactor is Zn(2+). Ubiquitinion by XIAP/BIRC4 leads to enhancement of its chaperone activity toward its physiologic target, SOD1, rather than proteasomal degradation. XIAP/BIRC4 preferentially ubiquitinates at Lys-241. Ubiquitous.

Its subcellular location is the cytoplasm. Functionally, delivers copper to copper zinc superoxide dismutase (SOD1). The protein is Copper chaperone for superoxide dismutase of Homo sapiens (Human).